Here is a 409-residue protein sequence, read N- to C-terminus: Elongation factor Tu, chloroplastic (409 aa).

In terms of domain architecture, tr-type G spans 10 to 214 (KPHVNIGTIG…AVDEYIPTPE (205 aa)). Residues 19-26 (GHVDHGKT) form a G1 region. A GTP-binding site is contributed by 19 to 26 (GHVDHGKT). A Mg(2+)-binding site is contributed by Thr-26. Positions 60–64 (GITIN) are G2. Residues 81 to 84 (DCPG) form a G3 region. Residues 81 to 85 (DCPGH) and 136 to 139 (NKED) contribute to the GTP site. A G4 region spans residues 136 to 139 (NKED). The tract at residues 174–176 (SAL) is G5.

Belongs to the TRAFAC class translation factor GTPase superfamily. Classic translation factor GTPase family. EF-Tu/EF-1A subfamily.

Its subcellular location is the plastid. The protein localises to the chloroplast. The enzyme catalyses GTP + H2O = GDP + phosphate + H(+). Its function is as follows. GTP hydrolase that promotes the GTP-dependent binding of aminoacyl-tRNA to the A-site of ribosomes during protein biosynthesis. This chain is Elongation factor Tu, chloroplastic (tufA), found in Trieres chinensis (Marine centric diatom).